We begin with the raw amino-acid sequence, 328 residues long: Malate dehydrogenase (328 aa).

11–17 (GAAGQIG) contributes to the NAD(+) binding site. Substrate-binding residues include arginine 94 and arginine 100. Residues asparagine 107, glutamine 114, and 131–133 (VGN) each bind NAD(+). Asparagine 133 and arginine 164 together coordinate substrate. The Proton acceptor role is filled by histidine 189.

The protein belongs to the LDH/MDH superfamily. MDH type 2 family.

It catalyses the reaction (S)-malate + NAD(+) = oxaloacetate + NADH + H(+). Catalyzes the reversible oxidation of malate to oxaloacetate. The chain is Malate dehydrogenase from Xylella fastidiosa (strain 9a5c).